A 128-amino-acid polypeptide reads, in one-letter code: Large ribosomal subunit protein bL12 (128 aa).

Belongs to the bacterial ribosomal protein bL12 family. Homodimer. Part of the ribosomal stalk of the 50S ribosomal subunit. Forms a multimeric L10(L12)X complex, where L10 forms an elongated spine to which 2 to 4 L12 dimers bind in a sequential fashion. Binds GTP-bound translation factors.

Forms part of the ribosomal stalk which helps the ribosome interact with GTP-bound translation factors. Is thus essential for accurate translation. The chain is Large ribosomal subunit protein bL12 from Desulfovibrio desulfuricans (strain ATCC 27774 / DSM 6949 / MB).